The chain runs to 145 residues: Large ribosomal subunit protein uL15 (145 aa).

The interval 1–57 is disordered; that stretch reads MKLNDLSPAPGSRREKHRPGRGIGSGLGKTGGRGHKGQTSRSGGTIAPGFEGGQQPL. Gly residues predominate over residues 21-31; sequence RGIGSGLGKTG.

Belongs to the universal ribosomal protein uL15 family. In terms of assembly, part of the 50S ribosomal subunit.

Its function is as follows. Binds to the 23S rRNA. The protein is Large ribosomal subunit protein uL15 of Pseudomonas fluorescens (strain SBW25).